Here is a 212-residue protein sequence, read N- to C-terminus: Histone H1.2 (212 aa).

Over residues 1 to 17 (MSEAAPAAPAAAPPAEK) the composition is skewed to low complexity. Positions 1–41 (MSEAAPAAPAAAPPAEKAPAKKKAAKKPAGVRRKASGPPVS) are disordered. The residue at position 2 (S2) is an N-acetylserine. S2 bears the Phosphoserine mark. K17 carries the post-translational modification N6-acetyllysine. Basic residues predominate over residues 20–35 (AKKKAAKKPAGVRRKA). K23, K26, and K27 each carry N6-(2-hydroxyisobutyryl)lysine. K34 carries the N6-(beta-hydroxybutyryl)lysine; alternate modification. K34 is subject to N6-crotonyllysine; alternate. The residue at position 34 (K34) is an N6-methyllysine; alternate. An H15 domain is found at 36 to 109 (SGPPVSELIT…GASGSFKLNK (74 aa)). K46 is subject to N6-(2-hydroxyisobutyryl)lysine. K52 is modified (N6-(beta-hydroxybutyryl)lysine; alternate). N6-(2-hydroxyisobutyryl)lysine; alternate is present on K52. A Citrulline modification is found at R54. An N6-(2-hydroxyisobutyryl)lysine modification is found at K63. K64 bears the N6-(beta-hydroxybutyryl)lysine; alternate mark. K64 carries the post-translational modification N6-crotonyllysine; alternate. Position 64 is an N6-(2-hydroxyisobutyryl)lysine; alternate (K64). 2 positions are modified to N6-(2-hydroxyisobutyryl)lysine: K75 and K81. K85 and K90 each carry N6-(beta-hydroxybutyryl)lysine; alternate. Residues K85, K90, and K97 each carry the N6-crotonyllysine; alternate modification. Residues K85, K90, and K97 each carry the N6-(2-hydroxyisobutyryl)lysine; alternate modification. K97 is subject to N6-succinyllysine; alternate. Residues 98–212 (GTGASGSFKL…KAKKVAAKKK (115 aa)) form a disordered region. Position 104 is a phosphoserine; by PKC (S104). Position 106 is an N6-(beta-hydroxybutyryl)lysine (K106). N6-(2-hydroxyisobutyryl)lysine is present on residues K110, K117, K121, K129, and K136. A compositionally biased stretch (low complexity) spans 121-148 (KKAGAAKAKKPAGAAKKPKKATGAATPK). At T146 the chain carries Phosphothreonine. K148 carries the N6-(2-hydroxyisobutyryl)lysine modification. The segment covering 149–160 (KAAKKTPKKAKK) has biased composition (basic residues). N6-crotonyllysine; alternate is present on residues K159 and K168. K159 and K168 each carry N6-(2-hydroxyisobutyryl)lysine; alternate. Over residues 169 to 212 (KVAKSPKKAKVTKPKKVKSASKAVKPKAAKPKVAKAKKVAAKKK) the composition is skewed to basic residues. Position 186 is an N6-methyllysine; by EHMT1 and EHMT2 (K186). Position 187 is an ADP-ribosylserine (S187). Position 212 is an N6-(2-hydroxyisobutyryl)lysine (K212).

The protein belongs to the histone H1/H5 family. Interacts with TSC22D1 isoform 2. H1 histones are progressively phosphorylated during the cell cycle, becoming maximally phosphorylated during late G2 phase and M phase, and being dephosphorylated sharply thereafter. In terms of processing, crotonylation (Kcr) is specifically present in male germ cells and marks testis-specific genes in post-meiotic cells, including X-linked genes that escape sex chromosome inactivation in haploid cells. Crotonylation marks active promoters and enhancers and confers resistance to transcriptional repressors. It is also associated with post-meiotically activated genes on autosomes. Post-translationally, ADP-ribosylated on Ser-187 in response to DNA damage. Citrullination at Arg-54 (H1R54ci) by PADI4 takes place within the DNA-binding site of H1 and results in its displacement from chromatin and global chromatin decondensation, thereby promoting pluripotency and stem cell maintenance. In terms of processing, hydroxybutyrylation of histones is induced by starvation.

It is found in the nucleus. The protein localises to the chromosome. Functionally, histone H1 protein binds to linker DNA between nucleosomes forming the macromolecular structure known as the chromatin fiber. Histones H1 are necessary for the condensation of nucleosome chains into higher-order structured fibers. Also acts as a regulator of individual gene transcription through chromatin remodeling, nucleosome spacing and DNA methylation. The protein is Histone H1.2 of Mus musculus (Mouse).